Here is a 234-residue protein sequence, read N- to C-terminus: GTP-binding protein ypt4 (234 aa).

16-23 (GPSGTGKS) contacts GTP. An Effector region motif is present at residues 39–47 (SHTVGIDFA). 68-72 (DTAGQ) is a GTP binding site. 2 S-geranylgeranyl cysteine lipidation sites follow: Cys-233 and Cys-234.

It belongs to the small GTPase superfamily. Rab family.

Its subcellular location is the cell membrane. The protein is GTP-binding protein ypt4 (ypt4) of Schizosaccharomyces pombe (strain 972 / ATCC 24843) (Fission yeast).